The sequence spans 346 residues: MALDVKSRAKRYEKLDFLGEGQFATVYKARDKNTNQIVAIKKIKLGHRSEAKDGINRTALREIKLLQELSHPNIIGLLDAFGHKSNISLVFDFMETDLEVIIKDNSLVLTPSHIKAYMLMTLQGLEYLHQHWILHRDLKPNNLLLDENGVLKLADFGLAKSFGSPNRAYTHQVVTRWYRAPELLFGARMYGVGVDMWAVGCILAELLLRVPFLPGDSDLDQLTRIFETLGTPTEEQWPDMCSLPDYVTFKSFPGIPLHHIFSAAGDDLLDLIQGLFLFNPCARITATQALKMKYFSNRPGPTPGCQLPRPNCPVETLKEQSNPALAIKRKRTEALEQGGLPKKLIF.

The residue at position 2 (A2) is an N-acetylalanine. S7 is modified (phosphoserine). The 284-residue stretch at 12–295 (YEKLDFLGEG…ATQALKMKYF (284 aa)) folds into the Protein kinase domain. Residues 18–26 (LGEGQFATV) and K41 contribute to the ATP site. The active-site Proton acceptor is D137. S164 is modified (phosphoserine; by CDK1 and CDK2). Residue T170 is modified to Phosphothreonine; by CDK2. At S321 the chain carries Phosphoserine.

Belongs to the protein kinase superfamily. CMGC Ser/Thr protein kinase family. CDC2/CDKX subfamily. As to quaternary structure, associates primarily with cyclin-H (CCNH) and MAT1 to form the CAK complex. CAK can further associate with the core-TFIIH to form the TFIIH basal transcription factor; this complex is sensitive to UV light. The CAK complex binds to p53/TP53 in response to DNA damage. Interacts with CDK2, SF1/NR5A1, PUF60 and PRKCI. Interacts with HINT1. Phosphorylation of Ser-164 during mitosis inactivates the enzyme. Phosphorylation of Thr-170 is required for activity. Phosphorylated at Ser-164 and Thr-170 by CDK2. As to expression, ubiquitous.

The protein resides in the nucleus. Its subcellular location is the cytoplasm. The protein localises to the perinuclear region. It carries out the reaction L-seryl-[protein] + ATP = O-phospho-L-seryl-[protein] + ADP + H(+). The enzyme catalyses L-threonyl-[protein] + ATP = O-phospho-L-threonyl-[protein] + ADP + H(+). The catalysed reaction is [DNA-directed RNA polymerase] + ATP = phospho-[DNA-directed RNA polymerase] + ADP + H(+). Inactivated by phosphorylation. Repressed by roscovitine (seliciclib, CYC202), R547 (Ro-4584820) and SNS-032 (BMS-387032). The association of p53/TP53 to the CAK complex in response to DNA damage reduces kinase activity toward CDK2 and RNA polymerase II repetitive C-terminal domain (CTD), thus stopping cell cycle progression. The inactivation by roscovitine promotes caspase-mediated apoptosis in leukemic cells. Specifically inactivated by THZ1. In terms of biological role, serine/threonine kinase involved in cell cycle control and in RNA polymerase II-mediated RNA transcription. Cyclin-dependent kinases (CDKs) are activated by the binding to a cyclin and mediate the progression through the cell cycle. Each different complex controls a specific transition between 2 subsequent phases in the cell cycle. Required for both activation and complex formation of CDK1/cyclin-B during G2-M transition, and for activation of CDK2/cyclins during G1-S transition (but not complex formation). CDK7 is the catalytic subunit of the CDK-activating kinase (CAK) complex. Phosphorylates SPT5/SUPT5H, SF1/NR5A1, POLR2A, p53/TP53, CDK1, CDK2, CDK4, CDK6 and CDK11B/CDK11. Initiates transcription by RNA polymerase II by mediating phosphorylation of POLR2A at 'Ser-5' of the repetitive C-terminal domain (CTD) when POLR2A is in complex with DNA, promoting dissociation from DNA and initiation. CAK activates the cyclin-associated kinases CDK1, CDK2, CDK4 and CDK6 by threonine phosphorylation, thus regulating cell cycle progression. CAK complexed to the core-TFIIH basal transcription factor activates RNA polymerase II by serine phosphorylation of the CTD of POLR2A, allowing its escape from the promoter and elongation of the transcripts. Its expression and activity are constant throughout the cell cycle. Upon DNA damage, triggers p53/TP53 activation by phosphorylation, but is inactivated in turn by p53/TP53; this feedback loop may lead to an arrest of the cell cycle and of the transcription, helping in cell recovery, or to apoptosis. Required for DNA-bound peptides-mediated transcription and cellular growth inhibition. In Homo sapiens (Human), this protein is Cyclin-dependent kinase 7 (CDK7).